A 280-amino-acid polypeptide reads, in one-letter code: UBX domain-containing protein 10 (280 aa).

Positions 41–94 (SAKGRTRPSLQKSQGVEVCAHHIPSPPPAIPYELPSSQKPGACAPKSPNQGASD) are disordered. Position 87 is a phosphoserine (Ser-87). The 78-residue stretch at 194 to 271 (DQEPRLLLAV…RIPHKSVLGI (78 aa)) folds into the UBX domain.

Belongs to the UBXN10 family. In terms of assembly, interacts with CLUAP1; the interaction is direct and mediates interaction with the intraflagellar transport complex B (IFT-B). Interacts with VCP; the interaction is direct.

It localises to the cell projection. The protein resides in the cilium. VCP/p97-binding protein required for ciliogenesis. Acts as a tethering factor that facilitates recruitment of VCP/p97 to the intraflagellar transport complex B (IFT-B) in cilia. UBX domain-containing proteins act as tethering factors for VCP/p97 and may specify substrate specificity of VCP/p97. The sequence is that of UBX domain-containing protein 10 from Homo sapiens (Human).